We begin with the raw amino-acid sequence, 683 residues long: DNA-directed RNA polymerase subunit beta' (683 aa).

Positions 69, 71, 87, and 90 each coordinate Zn(2+). Positions 492, 494, and 496 each coordinate Mg(2+).

It belongs to the RNA polymerase beta' chain family. RpoC1 subfamily. In plastids the minimal PEP RNA polymerase catalytic core is composed of four subunits: alpha, beta, beta', and beta''. When a (nuclear-encoded) sigma factor is associated with the core the holoenzyme is formed, which can initiate transcription. Mg(2+) serves as cofactor. The cofactor is Zn(2+).

The protein resides in the plastid. It localises to the chloroplast. It catalyses the reaction RNA(n) + a ribonucleoside 5'-triphosphate = RNA(n+1) + diphosphate. Functionally, DNA-dependent RNA polymerase catalyzes the transcription of DNA into RNA using the four ribonucleoside triphosphates as substrates. This Coffea arabica (Arabian coffee) protein is DNA-directed RNA polymerase subunit beta'.